A 387-amino-acid polypeptide reads, in one-letter code: ERBB-3 BINDING PROTEIN 1 (387 aa).

Necessary for nucleolar localization stretches follow at residues 1-49 (MSDD…IVDL) and 297-387 (LLQP…PMEG). Residues 47–55 (VDLCEKGDA) are RNA-binding. The disordered stretch occupies residues 337–387 (LQPTKTTENEPEIKAWLALPTKTKKKGGGKKKKGKKGDKVEEASQAEPMEG). An interaction with RNA region spans residues 356-373 (PTKTKKKGGGKKKKGKKG). Residues 358 to 372 (KTKKKGGGKKKKGKK) show a composition bias toward basic residues. Positions 360 to 369 (KKKGGGKKKK) match the Nuclear localization signal motif.

The protein belongs to the peptidase M24 family. Component of a ribonucleoprotein complex. In terms of tissue distribution, expressed during tuberisation and in roots, nodes, internodes, petioles, leaves, stolons, tubers and sprouts.

It is found in the nucleus. Binds RNA. Associates with 28S, 18S and 5.8S mature rRNAs, several rRNA precursors and probably U3 small nucleolar RNA. May be involved in regulation of intermediate and late steps of rRNA processing. May be involved in ribosome assembly. Required for expression of cell cycle genes such as CYCD3-1, RNR2A and CDKB1-1. Promotes, in a dose- and auxin-dependent manner, organ growth by stimulating both cell proliferation and expansion, via the regulation of RBR1 levels. The polypeptide is ERBB-3 BINDING PROTEIN 1 (Solanum tuberosum (Potato)).